Here is a 710-residue protein sequence, read N- to C-terminus: DNA polymerase epsilon subunit B (710 aa).

The interval 116–167 (FLKRPNSPTDTEITTLSQGSATSVVNPDSHSPMMLEEGSPINSDSEPISEHE) is disordered. The segment covering 121 to 144 (NSPTDTEITTLSQGSATSVVNPDS) has biased composition (polar residues).

It belongs to the DNA polymerase epsilon subunit B family. As to quaternary structure, heterotetramer. Consists of four subunits: POL2, DPB2, DPB3 and DPB4.

Its subcellular location is the nucleus. Its function is as follows. As accessory component of the DNA polymerase epsilon (DNA polymerase II) participates in chromosomal DNA replication. This chain is DNA polymerase epsilon subunit B (DPB2), found in Kluyveromyces lactis (strain ATCC 8585 / CBS 2359 / DSM 70799 / NBRC 1267 / NRRL Y-1140 / WM37) (Yeast).